Reading from the N-terminus, the 244-residue chain is Ribosomal RNA large subunit methyltransferase E (244 aa).

5 residues coordinate S-adenosyl-L-methionine: Gly81, Trp83, Asp109, Asp125, and Asp149. The active-site Proton acceptor is the Lys189.

The protein belongs to the class I-like SAM-binding methyltransferase superfamily. RNA methyltransferase RlmE family.

It is found in the cytoplasm. It catalyses the reaction uridine(2552) in 23S rRNA + S-adenosyl-L-methionine = 2'-O-methyluridine(2552) in 23S rRNA + S-adenosyl-L-homocysteine + H(+). Specifically methylates the uridine in position 2552 of 23S rRNA at the 2'-O position of the ribose in the fully assembled 50S ribosomal subunit. This is Ribosomal RNA large subunit methyltransferase E from Cereibacter sphaeroides (strain ATCC 17023 / DSM 158 / JCM 6121 / CCUG 31486 / LMG 2827 / NBRC 12203 / NCIMB 8253 / ATH 2.4.1.) (Rhodobacter sphaeroides).